The following is a 439-amino-acid chain: AT-hook motif nuclear-localized protein 13 (439 aa).

Disordered regions lie at residues 1–46, 69–216, and 342–439; these read MDSR…NSYN, QRLP…LGGT, and GRKQ…NSPQ. Low complexity-rich tracts occupy residues 9–31 and 79–95; these read QQQQ…QQQQ and PHQP…PQQQ. A compositionally biased stretch (polar residues) spans 109-120; the sequence is SPSSVAATQQHS. Positions 130 to 139 are enriched in basic residues; that stretch reads VKKKRGRPRK. The short motif at 131–139 is the Bipartite nuclear localization signal element; sequence KKKRGRPRK. Residues 131-143 constitute a DNA-binding region (a.T hook 1); the sequence is KKKRGRPRKYAAD. Gly residues-rich tracts occupy residues 143–152 and 171–183; these read DGGGGGGGGS and YGGG…GGDS. A DNA-binding region (a.T hook 2) is located at residues 196–208; sequence KRNRGRPPGSGKK. One can recognise a PPC domain in the interval 217–359; that stretch reads GGVGFTPHVI…GRAQNTPEPA (143 aa). A compositionally biased stretch (polar residues) spans 347 to 357; sequence QSAGRAQNTPE. Low complexity-rich tracts occupy residues 376-386 and 403-416; these read SPRSQGQQHSS and NNNN…FGNS. The segment covering 428 to 439 has biased composition (polar residues); the sequence is MYQNLWPGNSPQ.

It is found in the nucleus. Functionally, transcription factor that specifically binds AT-rich DNA sequences related to the nuclear matrix attachment regions (MARs). The chain is AT-hook motif nuclear-localized protein 13 from Arabidopsis thaliana (Mouse-ear cress).